The following is an 86-amino-acid chain: MRSCKQIFDKGLKPYYKHSVCLKPFFRFCFLKIHAYQQRYRAFALTLFSCKFFNACKIFIPIIDFKIVFIPILKHQAKLKRVSNAY.

This is an uncharacterized protein from Helicobacter pylori (strain J99 / ATCC 700824) (Campylobacter pylori J99).